We begin with the raw amino-acid sequence, 170 residues long: Cathelicidin antimicrobial peptide (170 aa).

An N-terminal signal peptide occupies residues 1–30 (MKTQRDGHSLGRWSLVLLLLGLVMPLAIVA). The propeptide at 31–131 (QVLSYKEAVL…DISCDKDNKR (101 aa)) is cathelin-like domain (CLD). 2 cysteine pairs are disulfide-bonded: Cys-86-Cys-97 and Cys-108-Cys-125. Positions 150 to 162 (FKRIVQRIKDFLR) are active core.

The protein belongs to the cathelicidin family. Monomer, homodimer or homotrimer (in vitro). Oligomerizes as tetra- or hexamer in solution (in vitro). Post-translationally, proteolytically cleaved by proteinase PRTN3 into antibacterial peptide LL-37. Proteolytically cleaved by cathepsin CTSG and neutrophil elastase ELANE. Resistant to proteolytic degradation in solution, and when bound to both zwitterionic (mimicking mammalian membranes) and negatively charged membranes (mimicking bacterial membranes). In terms of processing, after secretion onto the skin surface, the CAMP gene product is processed by a serine protease-dependent mechanism into multiple novel antimicrobial peptides distinct from and shorter than cathelicidin LL-37. These peptides show enhanced antimicrobial action, acquiring the ability to kill skin pathogens such as S.aureus, E.coli and C.albicans. These peptides have lost the ability to stimulate CXCL8/IL8 release from keratinocytes. The peptides act synergistically, killing bacteria at lower concentrations when present together, and maintain activity at increased salt condition.

It is found in the secreted. The protein localises to the vesicle. Its function is as follows. Antimicrobial protein that is an integral component of the innate immune system. Binds to bacterial lipopolysaccharides (LPS). Acts via neutrophil N-formyl peptide receptors to enhance the release of CXCL2. Postsecretory processing generates multiple cathelicidin antimicrobial peptides with various lengths which act as a topical antimicrobial defense in sweat on skin. The unprocessed precursor form, cathelicidin antimicrobial peptide, inhibits the growth of Gram-negative E.coli and E.aerogenes with efficiencies comparable to that of the mature peptide LL-37 (in vitro). Antimicrobial peptide that is an integral component of the innate immune system. Binds to bacterial lipopolysaccharides (LPS). Causes membrane permeabilization by forming transmembrane pores (in vitro). Causes lysis of E.coli. Exhibits antimicrobial activity against Gram-negative bacteria such as P.aeruginosa, S.typhimurium, E.aerogenes, E.coli and P.syringae, Gram-positive bacteria such as L.monocytogenes, S.epidermidis, S.pyogenes and S.aureus, as well as vancomycin-resistant enterococci (in vitro). Exhibits antimicrobial activity against methicillin-resistant S.aureus, P.mirabilis, and C.albicans in low-salt media, but not in media containing 100 mM NaCl (in vitro). Forms chiral supramolecular assemblies with quinolone signal (PQS) molecules of P.aeruginosa, which may lead to interference of bacterial quorum signaling and perturbance of bacterial biofilm formation. May form supramolecular fiber-like assemblies on bacterial membranes. Induces cytokine and chemokine producation as well as TNF/TNFA and CSF2/GMCSF production in normal human keratinocytes. Exhibits hemolytic activity against red blood cells. Functionally, exhibits antimicrobial activity against E.coli and B.megaterium (in vitro). In Pan troglodytes (Chimpanzee), this protein is Cathelicidin antimicrobial peptide.